Reading from the N-terminus, the 465-residue chain is ATP synthase subunit beta (465 aa).

Position 148–155 (148–155) interacts with ATP; the sequence is GGAGVGKT.

This sequence belongs to the ATPase alpha/beta chains family. As to quaternary structure, F-type ATPases have 2 components, CF(1) - the catalytic core - and CF(0) - the membrane proton channel. CF(1) has five subunits: alpha(3), beta(3), gamma(1), delta(1), epsilon(1). CF(0) has three main subunits: a(1), b(2) and c(9-12). The alpha and beta chains form an alternating ring which encloses part of the gamma chain. CF(1) is attached to CF(0) by a central stalk formed by the gamma and epsilon chains, while a peripheral stalk is formed by the delta and b chains.

It is found in the cell inner membrane. It carries out the reaction ATP + H2O + 4 H(+)(in) = ADP + phosphate + 5 H(+)(out). Its function is as follows. Produces ATP from ADP in the presence of a proton gradient across the membrane. The catalytic sites are hosted primarily by the beta subunits. The polypeptide is ATP synthase subunit beta (Neisseria gonorrhoeae (strain ATCC 700825 / FA 1090)).